Here is a 966-residue protein sequence, read N- to C-terminus: Leucine--tRNA ligase (966 aa).

The 'HIGH' region motif lies at 71–82 (PYPSGAGLHVGH). The interval 561 to 580 (YSPRTFDPDDADTKPETPLS) is disordered. Over residues 571-580 (ADTKPETPLS) the composition is skewed to basic and acidic residues. Residues 734–738 (KMGKS) carry the 'KMSKS' region motif. Lysine 737 serves as a coordination point for ATP.

Belongs to the class-I aminoacyl-tRNA synthetase family.

The protein resides in the cytoplasm. The catalysed reaction is tRNA(Leu) + L-leucine + ATP = L-leucyl-tRNA(Leu) + AMP + diphosphate. The polypeptide is Leucine--tRNA ligase (Streptomyces coelicolor (strain ATCC BAA-471 / A3(2) / M145)).